Here is a 162-residue protein sequence, read N- to C-terminus: Peroxiredoxin-2C (162 aa).

Residues 4 to 162 (VAVGDTLPDG…SGAEEILKAL (159 aa)) enclose the Thioredoxin domain. Cys51 functions as the Cysteine sulfenic acid (-SOH) intermediate in the catalytic mechanism.

This sequence belongs to the peroxiredoxin family. Prx5 subfamily. Monomer.

The protein resides in the cytoplasm. The catalysed reaction is [glutaredoxin]-dithiol + a hydroperoxide = [glutaredoxin]-disulfide + an alcohol + H2O. Functionally, reduces hydrogen peroxide and alkyl hydroperoxides with reducing equivalents provided through the thioredoxin or glutaredoxin system. May be involved in intracellular redox signaling. In terms of biological role, thiol-specific peroxidase that catalyzes the reduction of hydrogen peroxide and organic hydroperoxides to water and alcohols, respectively. Plays a role in cell protection against oxidative stress by detoxifying peroxides. In Oryza sativa subsp. japonica (Rice), this protein is Peroxiredoxin-2C (PRXIIC).